A 65-amino-acid polypeptide reads, in one-letter code: Potassium channel toxin kappa-KTx 2.7 (65 aa).

Residues 1-26 form the signal peptide; it reads MKTSGTVYVFLLLLAFGIFTDISSAC. A propeptide spanning residues 27-39 is cleaved from the precursor; it reads SEQMDDEDSYEVE. 2 cysteine pairs are disulfide-bonded: C45–C63 and C49–C59.

The protein belongs to the short scorpion toxin superfamily. Potassium channel inhibitor kappa-KTx family. Kappa-KTx 2 subfamily. Expressed by the venom gland.

It is found in the secreted. In terms of biological role, weakly inhibits the Kv7.1/KCNQ1 channel (10 uM of the toxin inhibits currents by 17.8%). This is Potassium channel toxin kappa-KTx 2.7 from Heterometrus petersii (Asian forest scorpion).